Here is a 436-residue protein sequence, read N- to C-terminus: Adenosylmethionine-8-amino-7-oxononanoate aminotransferase (436 aa).

W66 serves as a coordination point for substrate. Residue 126-127 (GS) participates in pyridoxal 5'-phosphate binding. Y159 contributes to the substrate binding site. A pyridoxal 5'-phosphate-binding site is contributed by D256. Substrate is bound by residues K285 and G318. The residue at position 285 (K285) is an N6-(pyridoxal phosphate)lysine. 319–320 (PT) contacts pyridoxal 5'-phosphate. R402 provides a ligand contact to substrate.

The protein belongs to the class-III pyridoxal-phosphate-dependent aminotransferase family. BioA subfamily. As to quaternary structure, homodimer. Pyridoxal 5'-phosphate serves as cofactor.

The protein resides in the cytoplasm. The enzyme catalyses (8S)-8-amino-7-oxononanoate + S-adenosyl-L-methionine = S-adenosyl-4-methylsulfanyl-2-oxobutanoate + (7R,8S)-7,8-diammoniononanoate. Its pathway is cofactor biosynthesis; biotin biosynthesis; 7,8-diaminononanoate from 8-amino-7-oxononanoate (SAM route): step 1/1. Catalyzes the transfer of the alpha-amino group from S-adenosyl-L-methionine (SAM) to 7-keto-8-aminopelargonic acid (KAPA) to form 7,8-diaminopelargonic acid (DAPA). It is the only aminotransferase known to utilize SAM as an amino donor. This is Adenosylmethionine-8-amino-7-oxononanoate aminotransferase from Mycobacterium leprae (strain TN).